Consider the following 282-residue polypeptide: Fused uL13/uS9 ribosomal subunit protein (282 aa).

Residues 1-141 (MLLMIINGEG…LGEISELLGA (141 aa)) form a large ribosomal subunit protein uL13 region. Residues 150-282 (MKKVIHTSGK…ARARRQKSYR (133 aa)) form a small ribosomal subunit protein uS9 region. The tract at residues 259–282 (DPRRSEPKKYGGRGARARRQKSYR) is disordered. Residues 273 to 282 (ARARRQKSYR) are compositionally biased toward basic residues.

The protein in the N-terminal section; belongs to the universal ribosomal protein uL13 family. This sequence in the C-terminal section; belongs to the universal ribosomal protein uS9 family. As to quaternary structure, L13 is part of the 50S ribosomal subunit. S9 is part of the 30S ribosomal subunit.

Its function is as follows. L13 protein is one of the early assembly proteins of the 50S ribosomal subunit, although it is not seen to bind rRNA by itself. It is important during the early stages of 50S assembly. In Methanothermobacter thermautotrophicus (strain ATCC 29096 / DSM 1053 / JCM 10044 / NBRC 100330 / Delta H) (Methanobacterium thermoautotrophicum), this protein is Fused uL13/uS9 ribosomal subunit protein (rpl13/rps9).